Here is a 441-residue protein sequence, read N- to C-terminus: ATP-dependent protease ATPase subunit HslU (441 aa).

ATP contacts are provided by residues Ile-18, 60-65 (GVGKTE), Asp-254, Glu-319, and Arg-391.

This sequence belongs to the ClpX chaperone family. HslU subfamily. As to quaternary structure, a double ring-shaped homohexamer of HslV is capped on each side by a ring-shaped HslU homohexamer. The assembly of the HslU/HslV complex is dependent on binding of ATP.

The protein resides in the cytoplasm. ATPase subunit of a proteasome-like degradation complex; this subunit has chaperone activity. The binding of ATP and its subsequent hydrolysis by HslU are essential for unfolding of protein substrates subsequently hydrolyzed by HslV. HslU recognizes the N-terminal part of its protein substrates and unfolds these before they are guided to HslV for hydrolysis. The protein is ATP-dependent protease ATPase subunit HslU of Shewanella pealeana (strain ATCC 700345 / ANG-SQ1).